We begin with the raw amino-acid sequence, 423 residues long: Phosphoribosylamine--glycine ligase (423 aa).

Residues 107-314 (KAFMAKYNIP…LSDLVEAAID (208 aa)) form the ATP-grasp domain. An ATP-binding site is contributed by 133-194 (VNQKGAPIVI…EDFLQGEEAS (62 aa)). Positions 284 and 286 each coordinate Mg(2+).

The protein belongs to the GARS family. Mg(2+) serves as cofactor. It depends on Mn(2+) as a cofactor.

The enzyme catalyses 5-phospho-beta-D-ribosylamine + glycine + ATP = N(1)-(5-phospho-beta-D-ribosyl)glycinamide + ADP + phosphate + H(+). It participates in purine metabolism; IMP biosynthesis via de novo pathway; N(1)-(5-phospho-D-ribosyl)glycinamide from 5-phospho-alpha-D-ribose 1-diphosphate: step 2/2. This is Phosphoribosylamine--glycine ligase from Neisseria meningitidis serogroup A / serotype 4A (strain DSM 15465 / Z2491).